Consider the following 224-residue polypeptide: uncharacterized protein (224 aa).

5 helical membrane passes run 32-52, 60-80, 100-120, 130-150, and 162-182; these read ILTLCQLLSPSMLVLHYPLVV, LFTNYLYAGTGFDFIMNIYFF, IIYLVKVALLIDAFSLISGLG, AIAYNWSLFNSFSKIQFLFGF, and LGFSFLTGGLPSLVVLGFGII.

The protein belongs to the derlin family.

It localises to the endoplasmic reticulum membrane. This is an uncharacterized protein from Schizosaccharomyces pombe (strain 972 / ATCC 24843) (Fission yeast).